A 478-amino-acid polypeptide reads, in one-letter code: Zinc metalloproteinase/disintegrin (478 aa).

The signal sequence occupies residues 1 to 20 (MIEVLLVTICLAVFPYPGSS). A propeptide spanning residues 21–190 (IILESGNVDD…KASQLYLTPE (170 aa)) is cleaved from the precursor. At Gln191 the chain carries Pyrrolidone carboxylic acid. The Peptidase M12B domain occupies 197 to 392 (RYIELAIVVD…SKPQCIINAP (196 aa)). Glu200 and Asp284 together coordinate Ca(2+). Cystine bridges form between Cys308–Cys387, Cys349–Cys371, and Cys351–Cys354. His333 lines the Zn(2+) pocket. Residue Glu334 is part of the active site. Residues His337 and His343 each contribute to the Zn(2+) site. Residues Cys387 and Asn390 each contribute to the Ca(2+) site. A propeptide spanning residues 393–410 (LRTDTVSTPVSGNEFLEA) is cleaved from the precursor. The region spanning 400–478 (TPVSGNEFLE…GQSADCPRNS (79 aa)) is the Disintegrin domain. Cystine bridges form between Cys414–Cys429, Cys416–Cys424, Cys423–Cys446, Cys437–Cys443, Cys442–Cys467, and Cys455–Cys474. The Cell attachment site motif lies at 459 to 461 (RGD). A disordered region spans residues 459 to 478 (RGDNPDDRCTGQSADCPRNS). The span at 468 to 478 (TGQSADCPRNS) shows a compositional bias: polar residues.

Belongs to the venom metalloproteinase (M12B) family. P-II subfamily. P-IIa sub-subfamily. As to quaternary structure, monomer. Requires Zn(2+) as cofactor. In terms of processing, not N-glycosylated. As to expression, expressed by the venom gland.

The protein localises to the secreted. The catalysed reaction is Cleavage of 3-Asn-|-Gln-4, 10-His-|-Leu-11 and 14-Ala-|-Leu-15 in the insulin B chain, and the bond Z-Gly-Pro-|-Leu-Gly-Pro in a small molecule substrate of microbial collagenase.. Functionally, zinc protease that induces hemorrhage. Inhibits platelet aggregation induced by ADP, thrombin, and collagen. Acts by inhibiting fibrinogen interaction with platelet receptors GPIIb/GPIIIa (ITGA2B/ITGB3). In Protobothrops flavoviridis (Habu), this protein is Zinc metalloproteinase/disintegrin.